A 92-amino-acid chain; its full sequence is Small ribosomal subunit protein uS19 (92 aa).

Belongs to the universal ribosomal protein uS19 family.

Protein S19 forms a complex with S13 that binds strongly to the 16S ribosomal RNA. The chain is Small ribosomal subunit protein uS19 from Thermobifida fusca (strain YX).